We begin with the raw amino-acid sequence, 364 residues long: MQDRQKAQDYRALLLADTPLIDVRAPIEFEQGAMPGAINLPLMMDDERAAVGTCYKRQGADAALALGHRLVCGDIDQQRLEAWKAAYQRFPNGYLCCARGGQRSHIVQRWLQETGIDCPLIEGGYKALRQTAIQATWQLAQKPILLIGGCTGSGKTQLVRQQPNGVDLEGLARHRGSSFGRTLNPQLSQASFENKLAVELLKINARQTLKRWVLEDEGRTIGANHLPECLRERMAQAPIAVVEDPFALRLERLREEYFIRMHHDFTHAYGDEAGWQAYSKYLHHGLFAIRRRLGLQRFAELTDTLDRALAEQLSSGSTDGHMAWLVPLLNEYYDPMYRYQLEKKAANIVFRGTWQEVANWLKAQ.

Positions 14–137 constitute a Rhodanese domain; that stretch reads LLADTPLIDV…LRQTAIQATW (124 aa). The active-site S-selanylcysteine intermediate is cysteine 97.

This sequence belongs to the SelU family. As to quaternary structure, monomer.

It carries out the reaction 5-methylaminomethyl-2-thiouridine(34) in tRNA + selenophosphate + (2E)-geranyl diphosphate + H2O + H(+) = 5-methylaminomethyl-2-selenouridine(34) in tRNA + (2E)-thiogeraniol + phosphate + diphosphate. The catalysed reaction is 5-methylaminomethyl-2-thiouridine(34) in tRNA + (2E)-geranyl diphosphate = 5-methylaminomethyl-S-(2E)-geranyl-thiouridine(34) in tRNA + diphosphate. The enzyme catalyses 5-methylaminomethyl-S-(2E)-geranyl-thiouridine(34) in tRNA + selenophosphate + H(+) = 5-methylaminomethyl-2-(Se-phospho)selenouridine(34) in tRNA + (2E)-thiogeraniol. It catalyses the reaction 5-methylaminomethyl-2-(Se-phospho)selenouridine(34) in tRNA + H2O = 5-methylaminomethyl-2-selenouridine(34) in tRNA + phosphate. Its function is as follows. Involved in the post-transcriptional modification of the uridine at the wobble position (U34) of tRNA(Lys), tRNA(Glu) and tRNA(Gln). Catalyzes the conversion of 2-thiouridine (S2U-RNA) to 2-selenouridine (Se2U-RNA). Acts in a two-step process involving geranylation of 2-thiouridine (S2U) to S-geranyl-2-thiouridine (geS2U) and subsequent selenation of the latter derivative to 2-selenouridine (Se2U) in the tRNA chain. The chain is tRNA 2-selenouridine synthase from Salmonella enteritidis.